We begin with the raw amino-acid sequence, 102 residues long: Small ribosomal subunit protein uS10 (102 aa).

Belongs to the universal ribosomal protein uS10 family. Part of the 30S ribosomal subunit.

Functionally, involved in the binding of tRNA to the ribosomes. The polypeptide is Small ribosomal subunit protein uS10 (Halalkalibacterium halodurans (strain ATCC BAA-125 / DSM 18197 / FERM 7344 / JCM 9153 / C-125) (Bacillus halodurans)).